Reading from the N-terminus, the 65-residue chain is Large ribosomal subunit protein uL30 (65 aa).

It belongs to the universal ribosomal protein uL30 family. In terms of assembly, part of the 50S ribosomal subunit.

In Desulfosudis oleivorans (strain DSM 6200 / JCM 39069 / Hxd3) (Desulfococcus oleovorans), this protein is Large ribosomal subunit protein uL30.